The sequence spans 276 residues: Orotidine 5'-phosphate decarboxylase (276 aa).

The active-site Proton donor is the Lys-95.

The protein belongs to the OMP decarboxylase family. Type 2 subfamily.

The enzyme catalyses orotidine 5'-phosphate + H(+) = UMP + CO2. It functions in the pathway pyrimidine metabolism; UMP biosynthesis via de novo pathway; UMP from orotate: step 2/2. This chain is Orotidine 5'-phosphate decarboxylase (pyrF), found in Mycolicibacterium smegmatis (strain ATCC 700084 / mc(2)155) (Mycobacterium smegmatis).